The primary structure comprises 475 residues: Ankyrin repeat, SAM and basic leucine zipper domain-containing protein 1 (475 aa).

The segment at methionine 1–glycine 24 is disordered. Phosphoserine is present on residues serine 17, serine 18, and serine 20. 6 ANK repeats span residues glutamate 45–serine 74, tyrosine 78–phenylalanine 107, aspartate 110–valine 144, arginine 148–alanine 177, asparagine 181–leucine 210, and aspartate 214–glycine 243. The SAM domain maps to serine 272–glutamate 334.

Interacts with DDX4, PIWIL1, RANBP9 and TDRD1.

The protein localises to the cytoplasm. Plays a central role during spermatogenesis by repressing transposable elements and preventing their mobilization, which is essential for the germline integrity. Acts via the piRNA metabolic process, which mediates the repression of transposable elements during meiosis by forming complexes composed of piRNAs and Piwi proteins and governs the methylation and subsequent repression of transposons. Its association with pi-bodies suggests a participation in the primary piRNAs metabolic process. Required prior to the pachytene stage to facilitate the production of multiple types of piRNAs, including those associated with repeats involved in the regulation of retrotransposons. May act by mediating protein-protein interactions during germ cell maturation. This Neofelis nebulosa (Clouded leopard) protein is Ankyrin repeat, SAM and basic leucine zipper domain-containing protein 1 (ASZ1).